The sequence spans 209 residues: Thiamine-phosphate synthase 1 (209 aa).

4-amino-2-methyl-5-(diphosphooxymethyl)pyrimidine contacts are provided by residues 39 to 43 (QFREK) and N74. D75 and D94 together coordinate Mg(2+). S112 serves as a coordination point for 4-amino-2-methyl-5-(diphosphooxymethyl)pyrimidine. Position 138–140 (138–140 (TQS)) interacts with 2-[(2R,5Z)-2-carboxy-4-methylthiazol-5(2H)-ylidene]ethyl phosphate. K141 is a binding site for 4-amino-2-methyl-5-(diphosphooxymethyl)pyrimidine. 2-[(2R,5Z)-2-carboxy-4-methylthiazol-5(2H)-ylidene]ethyl phosphate is bound by residues G170 and 190 to 191 (IS).

The protein belongs to the thiamine-phosphate synthase family. Mg(2+) is required as a cofactor.

The enzyme catalyses 2-[(2R,5Z)-2-carboxy-4-methylthiazol-5(2H)-ylidene]ethyl phosphate + 4-amino-2-methyl-5-(diphosphooxymethyl)pyrimidine + 2 H(+) = thiamine phosphate + CO2 + diphosphate. It carries out the reaction 2-(2-carboxy-4-methylthiazol-5-yl)ethyl phosphate + 4-amino-2-methyl-5-(diphosphooxymethyl)pyrimidine + 2 H(+) = thiamine phosphate + CO2 + diphosphate. The catalysed reaction is 4-methyl-5-(2-phosphooxyethyl)-thiazole + 4-amino-2-methyl-5-(diphosphooxymethyl)pyrimidine + H(+) = thiamine phosphate + diphosphate. The protein operates within cofactor biosynthesis; thiamine diphosphate biosynthesis; thiamine phosphate from 4-amino-2-methyl-5-diphosphomethylpyrimidine and 4-methyl-5-(2-phosphoethyl)-thiazole: step 1/1. Functionally, condenses 4-methyl-5-(beta-hydroxyethyl)thiazole monophosphate (THZ-P) and 2-methyl-4-amino-5-hydroxymethyl pyrimidine pyrophosphate (HMP-PP) to form thiamine monophosphate (TMP). This chain is Thiamine-phosphate synthase 1, found in Streptococcus pneumoniae (strain ATCC BAA-255 / R6).